A 912-amino-acid chain; its full sequence is Receptor protein kinase WSS1 (912 aa).

The N-terminal stretch at 1–27 (MGRDARRLPLLPFLLLLLAAAAGVAES) is a signal peptide. The Extracellular portion of the chain corresponds to 28–477 (ATDAEAIHDL…AGGGKSKPNT (450 aa)). 3 LRR repeats span residues 64–88 (AGKV…LSSL), 89–111 (TSLT…LARM), and 112–134 (GSLA…FLHG). N-linked (GlcNAc...) asparagine glycans are attached at residues asparagine 159, asparagine 170, asparagine 196, asparagine 256, asparagine 286, asparagine 371, asparagine 376, asparagine 387, and asparagine 400. LRR repeat units follow at residues 184-208 (LVSL…LSSL), 235-261 (MKSL…TQLE), 281-303 (LMSL…AFAA), 364-388 (SSDV…LANL), 389-411 (TRLA…VLTT), and 413-438 (PSLT…SVNV). A disordered region spans residues 448–472 (SSGSSGGGGGSDGDSSSSDSAGGGK). The helical transmembrane segment at 478–498 (GMIIGIIVAVIILFACIALLV) threads the bilayer. The Cytoplasmic portion of the chain corresponds to 499–912 (HHRKKKNVEK…SFNVPRKYNG (414 aa)). The Protein kinase domain maps to 580–859 (FSEDCILGRG…HCVNRLSSLV (280 aa)). ATP-binding positions include 586–594 (LGRGGFGVV) and lysine 607. Aspartate 708 serves as the catalytic Proton acceptor.

The protein belongs to the protein kinase superfamily. Ser/Thr protein kinase family. Mn(2+) serves as cofactor. Expressed in young and mature leaves.

It is found in the cell membrane. The catalysed reaction is L-seryl-[protein] + ATP = O-phospho-L-seryl-[protein] + ADP + H(+). It catalyses the reaction L-threonyl-[protein] + ATP = O-phospho-L-threonyl-[protein] + ADP + H(+). Transmembrane kinase receptor involved in the regulation of reactive oxygen species (ROS) homeostasis, chloroplast development and leaf senescence. This is Receptor protein kinase WSS1 from Oryza sativa subsp. japonica (Rice).